Here is a 277-residue protein sequence, read N- to C-terminus: Putative phosphoenolpyruvate synthase regulatory protein (277 aa).

Residue glycine 156–threonine 163 coordinates ADP.

Belongs to the pyruvate, phosphate/water dikinase regulatory protein family. PSRP subfamily.

The enzyme catalyses [pyruvate, water dikinase] + ADP = [pyruvate, water dikinase]-phosphate + AMP + H(+). It catalyses the reaction [pyruvate, water dikinase]-phosphate + phosphate + H(+) = [pyruvate, water dikinase] + diphosphate. Its function is as follows. Bifunctional serine/threonine kinase and phosphorylase involved in the regulation of the phosphoenolpyruvate synthase (PEPS) by catalyzing its phosphorylation/dephosphorylation. The polypeptide is Putative phosphoenolpyruvate synthase regulatory protein (Deinococcus radiodurans (strain ATCC 13939 / DSM 20539 / JCM 16871 / CCUG 27074 / LMG 4051 / NBRC 15346 / NCIMB 9279 / VKM B-1422 / R1)).